The sequence spans 177 residues: Putative HVA22-like protein g (177 aa).

The interval Q145–D165 is disordered. Basic and acidic residues predominate over residues S150 to D165.

This sequence belongs to the DP1 family.

The chain is Putative HVA22-like protein g (HVA22G) from Arabidopsis thaliana (Mouse-ear cress).